A 484-amino-acid chain; its full sequence is Probable receptor-like protein kinase At5g18500 (484 aa).

The chain crosses the membrane as a helical span at residues 21–41 (IIVIVLSAIFVVVLAISLWLT). The segment at 72–135 (RVDEVSSSNG…SVSSANPLTA (64 aa)) is disordered. Residues 91-105 (KFGDKEPEKGIKAES) show a composition bias toward basic and acidic residues. The segment covering 125-134 (SSVSSANPLT) has biased composition (polar residues). The residue at position 155 (T155) is a Phosphothreonine. The region spanning 166 to 445 (FSRDNIIGDG…MLESEEYPIA (280 aa)) is the Protein kinase domain. Residues 172-180 (IGDGGYGVV) and K194 each bind ATP. Y239 carries the post-translational modification Phosphotyrosine. Catalysis depends on D292, which acts as the Proton acceptor. Phosphoserine is present on S296. T326 and T331 each carry phosphothreonine. The residue at position 339 (Y339) is a Phosphotyrosine. A disordered region spans residues 425–484 (EKRPRMSQVARMLESEEYPIAREDRRRRRSQNGTTRDSDPPRNSTDTDKSEYHDLKPEGG). Over residues 460–484 (RDSDPPRNSTDTDKSEYHDLKPEGG) the composition is skewed to basic and acidic residues.

Belongs to the protein kinase superfamily. Ser/Thr protein kinase family.

The protein localises to the cell membrane. It catalyses the reaction L-seryl-[protein] + ATP = O-phospho-L-seryl-[protein] + ADP + H(+). The catalysed reaction is L-threonyl-[protein] + ATP = O-phospho-L-threonyl-[protein] + ADP + H(+). The chain is Probable receptor-like protein kinase At5g18500 from Arabidopsis thaliana (Mouse-ear cress).